The sequence spans 569 residues: Urease subunit alpha (569 aa).

The 439-residue stretch at 131 to 569 (GGIDTHIHFI…LPLAQRYLLL (439 aa)) folds into the Urease domain. Ni(2+) is bound by residues His136, His138, and Lys219. Position 219 is an N6-carboxylysine (Lys219). His221 serves as a coordination point for substrate. Ni(2+)-binding residues include His248 and His274. His322 acts as the Proton donor in catalysis. Residue Asp362 participates in Ni(2+) binding.

The protein belongs to the metallo-dependent hydrolases superfamily. Urease alpha subunit family. Heterotrimer of UreA (gamma), UreB (beta) and UreC (alpha) subunits. Three heterotrimers associate to form the active enzyme. The cofactor is Ni cation. In terms of processing, carboxylation allows a single lysine to coordinate two nickel ions.

The protein localises to the cytoplasm. It carries out the reaction urea + 2 H2O + H(+) = hydrogencarbonate + 2 NH4(+). It functions in the pathway nitrogen metabolism; urea degradation; CO(2) and NH(3) from urea (urease route): step 1/1. The protein is Urease subunit alpha of Parasynechococcus marenigrum (strain WH8102).